We begin with the raw amino-acid sequence, 735 residues long: DNA replication licensing factor mcm5-B (735 aa).

The MCM domain maps to 332 to 538 (IYETVAKSIA…RDMTLAKHVM (207 aa)). Arg372 contacts ADP. An Arginine finger motif is present at residues 513–516 (SRFD).

Belongs to the MCM family. As to quaternary structure, component of the mcm2-7 complex (RLF-M). The complex forms a toroidal hexameric ring with the proposed subunit order mcm2-mcm6-mcm4-mcm7-mcm3-mcm5. The heterodimer of mmcm3/mcm5 interacts with mcm4, mmcm6, mcm7 and weakly with mcm2. Component of the CMG helicase complex, composed of the mcm2-7 complex, the GINS complex and cdc45.

The protein resides in the nucleus. Its subcellular location is the chromosome. It carries out the reaction ATP + H2O = ADP + phosphate + H(+). In terms of biological role, acts as a component of the MCM2-7 complex (MCM complex) which is the replicative helicase essential for 'once per cell cycle' DNA replication initiation and elongation in eukaryotic cells. Core component of CDC45-MCM-GINS (CMG) helicase, the molecular machine that unwinds template DNA during replication, and around which the replisome is built. The active ATPase sites in the MCM2-7 ring are formed through the interaction surfaces of two neighboring subunits such that a critical structure of a conserved arginine finger motif is provided in trans relative to the ATP-binding site of the Walker A box of the adjacent subunit. The six ATPase active sites, however, are likely to contribute differentially to the complex helicase activity. This chain is DNA replication licensing factor mcm5-B (mcm5-b), found in Xenopus laevis (African clawed frog).